Consider the following 582-residue polypeptide: WD repeat-containing protein JIP5 (582 aa).

WD repeat units follow at residues 27-68, 125-168, 177-216, 265-310, and 373-410; these read KYPE…EAQS, RHKG…VLSK, DKNDAITKLVHSTSHPFLLSGTENGDVLVYDSNNMASNQL, DQED…LMDQ, and GPADEVGILDIDYDYRLISAGMDSLKIWSNQEETLNSD. Disordered regions lie at residues 405 to 496 and 531 to 582; these read ETLN…DTEL and TKEQ…FDDL. 2 stretches are compositionally biased toward acidic residues: residues 410-438 and 447-485; these read DSDDSDSDDSDSDIGSNDSEDSDSDDDDV and EVNDFSPDSDSETGNDDSDENLEDVADSDSNEDQIENVT. 2 stretches are compositionally biased toward basic and acidic residues: residues 531–540 and 570–582; these read TKEQSTKKAD and QKHEHGIRRFDDL.

It belongs to the WD repeat WDR55 family.

The protein resides in the nucleus. Its subcellular location is the nucleolus. The sequence is that of WD repeat-containing protein JIP5 (JIP5) from Debaryomyces hansenii (strain ATCC 36239 / CBS 767 / BCRC 21394 / JCM 1990 / NBRC 0083 / IGC 2968) (Yeast).